A 335-amino-acid polypeptide reads, in one-letter code: MNQWMELANRVLAGAEVTDEEALSILHCPDEDILLLMHGAFHIRKHFYGKKVKLNMIMNAKSGLCPENCGYCSQSAISKAPIESYRMVNKETLLEGAKRAHDLNIGTYCIVASGRGPSNREVDQVVDAVQEIKETYGLKVCACLGLLKPEQAKRLKDAGVDRYNHNLNTSQRNHSNITTSHTYDDRVNTVEIAKESGLSPCSGAIIGIKETKQDVIDIAKSLKALDADSIPVNFLHAIDGTPLEGVNELNPLYCLKVLALFRFINPSKEIRISGGREVNLRSLQPLGLYAANSIFVGDYLTTAGQEETEDHKMLSDLGFEVESVEEMKASLSAKS.

A Radical SAM core domain is found at Phe-47 to Arg-276. Cys-65, Cys-69, and Cys-72 together coordinate [4Fe-4S] cluster. [2Fe-2S] cluster contacts are provided by Cys-109, Cys-141, Cys-201, and Arg-271.

The protein belongs to the radical SAM superfamily. Biotin synthase family. As to quaternary structure, homodimer. Requires [4Fe-4S] cluster as cofactor. [2Fe-2S] cluster serves as cofactor.

It carries out the reaction (4R,5S)-dethiobiotin + (sulfur carrier)-SH + 2 reduced [2Fe-2S]-[ferredoxin] + 2 S-adenosyl-L-methionine = (sulfur carrier)-H + biotin + 2 5'-deoxyadenosine + 2 L-methionine + 2 oxidized [2Fe-2S]-[ferredoxin]. The protein operates within cofactor biosynthesis; biotin biosynthesis; biotin from 7,8-diaminononanoate: step 2/2. Functionally, catalyzes the conversion of dethiobiotin (DTB) to biotin by the insertion of a sulfur atom into dethiobiotin via a radical-based mechanism. This Bacillus subtilis subsp. natto protein is Biotin synthase.